The chain runs to 304 residues: UDP-3-O-acyl-N-acetylglucosamine deacetylase (304 aa).

Zn(2+) contacts are provided by histidine 77, histidine 233, and aspartate 237. Catalysis depends on histidine 260, which acts as the Proton donor.

Belongs to the LpxC family. It depends on Zn(2+) as a cofactor.

The catalysed reaction is a UDP-3-O-[(3R)-3-hydroxyacyl]-N-acetyl-alpha-D-glucosamine + H2O = a UDP-3-O-[(3R)-3-hydroxyacyl]-alpha-D-glucosamine + acetate. The protein operates within glycolipid biosynthesis; lipid IV(A) biosynthesis; lipid IV(A) from (3R)-3-hydroxytetradecanoyl-[acyl-carrier-protein] and UDP-N-acetyl-alpha-D-glucosamine: step 2/6. Catalyzes the hydrolysis of UDP-3-O-myristoyl-N-acetylglucosamine to form UDP-3-O-myristoylglucosamine and acetate, the committed step in lipid A biosynthesis. This Lawsonia intracellularis (strain PHE/MN1-00) protein is UDP-3-O-acyl-N-acetylglucosamine deacetylase.